The chain runs to 521 residues: Peroxisomal membrane protein PEX23 (521 aa).

A disordered region spans residues 1–26; that stretch reads MPTDPNSNPVSKAGLTPSSINSNISE. N23 and N53 each carry an N-linked (GlcNAc...) asparagine glycan. 2 consecutive transmembrane segments (helical) span residues 111-128 and 133-150; these read SYIS…ILYF and IYLG…YSIF. An N-linked (GlcNAc...) asparagine glycan is attached at N189. The chain crosses the membrane as a helical span at residues 198–217; that stretch reads LLFTSIFLSPGYILVCYLLF. N279 carries an N-linked (GlcNAc...) asparagine glycan. Residues 425–446 form a disordered region; it reads VSPGDDSSTDSASLPHSASETV. Over residues 429-446 the composition is skewed to polar residues; it reads DDSSTDSASLPHSASETV. N-linked (GlcNAc...) asparagine glycans are attached at residues N463 and N467. The disordered stretch occupies residues 465–486; the sequence is SGNITTSAETAPDSAGTAKKRK.

It belongs to the PEX28-32 family. PEX32 subfamily.

It is found in the endoplasmic reticulum membrane. With PEX29, contributes to the formation of endoplasmic reticulum-mitochondria junctions which are important for mitochondrial function. Involved in lipid dropplets formation. This is Peroxisomal membrane protein PEX23 from Ogataea parapolymorpha (strain ATCC 26012 / BCRC 20466 / JCM 22074 / NRRL Y-7560 / DL-1) (Yeast).